Consider the following 496-residue polypeptide: Aldehyde dehydrogenase 1A1 (496 aa).

2 positions are modified to N6-acetyllysine: lysine 86 and lysine 123. NAD(+) contacts are provided by residues 162-165 (IPWN), 188-191 (KPAE), 221-222 (GP), and 241-242 (GS). The residue at position 247 (lysine 247) is an N6-acetyllysine. The active-site Proton acceptor is glutamate 264. Residue 264 to 266 (ELG) participates in NAD(+) binding. Cysteine 298 serves as the catalytic Nucleophile. The interval 331–496 (LAPEVNQGPQ…VTVKISQKNS (166 aa)) is mediates interaction with PRMT3. An NAD(+)-binding site is contributed by 344–348 (EQYNK). An N6-acetyllysine mark is found at lysine 348 and lysine 362. 395 to 397 (EIF) provides a ligand contact to NAD(+). An N6-acetyllysine modification is found at lysine 405. Position 408 is a phosphoserine (serine 408). Lysine 414, lysine 430, and lysine 490 each carry N6-acetyllysine.

This sequence belongs to the aldehyde dehydrogenase family. Homotetramer. Interacts with PRMT3; the interaction is direct, inhibits ALDH1A1 aldehyde dehydrogenase activity and is independent of the methyltransferase activity of PRMT3. Post-translationally, the N-terminus is blocked most probably by acetylation.

Its subcellular location is the cytoplasm. The protein resides in the cytosol. It is found in the cell projection. The protein localises to the axon. It carries out the reaction an aldehyde + NAD(+) + H2O = a carboxylate + NADH + 2 H(+). The enzyme catalyses all-trans-retinal + NAD(+) + H2O = all-trans-retinoate + NADH + 2 H(+). The catalysed reaction is 9-cis-retinal + NAD(+) + H2O = 9-cis-retinoate + NADH + 2 H(+). It catalyses the reaction 11-cis-retinal + NAD(+) + H2O = 11-cis-retinoate + NADH + 2 H(+). It carries out the reaction 13-cis-retinal + NAD(+) + H2O = 13-cis-retinoate + NADH + 2 H(+). The enzyme catalyses (E)-4-hydroxynon-2-enal + NAD(+) + H2O = (E)-4-hydroxynon-2-enoate + NADH + 2 H(+). The catalysed reaction is malonaldehyde + NAD(+) + H2O = 3-oxopropanoate + NADH + 2 H(+). It catalyses the reaction hexanal + NAD(+) + H2O = hexanoate + NADH + 2 H(+). It carries out the reaction propanal + NAD(+) + H2O = propanoate + NADH + 2 H(+). The enzyme catalyses 3-deoxyglucosone + NAD(+) + H2O = 2-dehydro-3-deoxy-D-gluconate + NADH + 2 H(+). The catalysed reaction is acetaldehyde + NAD(+) + H2O = acetate + NADH + 2 H(+). It catalyses the reaction benzaldehyde + NAD(+) + H2O = benzoate + NADH + 2 H(+). It carries out the reaction 4-aminobutanal + NAD(+) + H2O = 4-aminobutanoate + NADH + 2 H(+). It participates in cofactor metabolism; retinol metabolism. In terms of biological role, cytosolic dehydrogenase that catalyzes the irreversible oxidation of a wide range of aldehydes to their corresponding carboxylic acid. Functions downstream of retinol dehydrogenases and catalyzes the oxidation of retinaldehyde into retinoic acid, the second step in the oxidation of retinol/vitamin A into retinoic acid. This pathway is crucial to control the levels of retinol and retinoic acid, two important molecules which excess can be teratogenic and cytotoxic. Also oxidizes aldehydes resulting from lipid peroxidation like (E)-4-hydroxynon-2-enal/HNE, malonaldehyde and hexanal that form protein adducts and are highly cytotoxic. By participating for instance to the clearance of (E)-4-hydroxynon-2-enal/HNE in the lens epithelium prevents the formation of HNE-protein adducts and lens opacification. Functions also downstream of fructosamine-3-kinase in the fructosamine degradation pathway by catalyzing the oxidation of 3-deoxyglucosone, the carbohydrate product of fructosamine 3-phosphate decomposition, which is itself a potent glycating agent that may react with lysine and arginine side-chains of proteins. Also has an aminobutyraldehyde dehydrogenase activity and is probably part of an alternative pathway for the biosynthesis of GABA/4-aminobutanoate in midbrain, thereby playing a role in GABAergic synaptic transmission. This Oryctolagus cuniculus (Rabbit) protein is Aldehyde dehydrogenase 1A1.